We begin with the raw amino-acid sequence, 209 residues long: Ribonuclease HII (209 aa).

The 185-residue stretch at 25–209 (RRIAGIDEAG…ATFRGVREYL (185 aa)) folds into the RNase H type-2 domain. A divalent metal cation-binding residues include Asp-31, Glu-32, and Asp-123.

The protein belongs to the RNase HII family. Mn(2+) is required as a cofactor. The cofactor is Mg(2+).

Its subcellular location is the cytoplasm. The catalysed reaction is Endonucleolytic cleavage to 5'-phosphomonoester.. Its function is as follows. Endonuclease that specifically degrades the RNA of RNA-DNA hybrids. The chain is Ribonuclease HII from Syntrophotalea carbinolica (strain DSM 2380 / NBRC 103641 / GraBd1) (Pelobacter carbinolicus).